Reading from the N-terminus, the 355-residue chain is cGAMP-activated phospholipase (355 aa).

A PNPLA domain is found at 17 to 214 (LSLNGGGARG…VANNPSFIGL (198 aa)). The short motif at 21-26 (GGGARG) is the GXGXXG element. The short motif at 60–64 (GTSIG) is the GXSXG element. Catalysis depends on serine 62, which acts as the Nucleophile. The active-site Proton acceptor is the aspartate 201. Residues 201–203 (DGG) carry the DGA/G motif.

It belongs to the patatin family.

It catalyses the reaction a 1,2-diacyl-sn-glycero-3-phosphocholine + H2O = a 2-acyl-sn-glycero-3-phosphocholine + a fatty acid + H(+). The catalysed reaction is 1,2-di-(9Z-octadecenoyl)-sn-glycero-3-phosphoethanolamine + 2 H2O = sn-glycero-3-phosphoethanolamine + 2 (9Z)-octadecenoate + 2 H(+). Its activity is regulated as follows. Phospholipase activity is specifically activated upon 3',3'-cGAMP (cGAMP) binding. Is not activated by the other cyclic dinucleotides 3',3'-cUAMP, 3',3'-c-diAMP and 3',3'-c-diGMP. Therefore, is specifically activated by only the nucleotide synthesized from its adjacently encoded nucleotidyltransferase (DncV). The cGAMP-activation of lipase is inhibited by T4 phage protein Acb2 (Vs.4). Functionally, effector phospholipase of a CBASS antiviral system. CBASS (cyclic oligonucleotide-based antiphage signaling system) provides immunity against bacteriophages. The CD-NTase protein (DncV) synthesizes cyclic nucleotides in response to infection; these serve as specific second messenger signals. The signals activate a diverse range of effectors, leading to bacterial cell death and thus abortive phage infection. A type II-A(GA) CBASS system. In terms of biological role, phospholipase that is activated upon binding to the cyclic dinucleotide (CDN) second messenger 3',3'-cyclic GMP-AMP (3',3'-cGAMP). Then degrades phosphatidylethanolamine (PE) and phosphatidylglycerol (PG), the major phospholipids in the cell membrane of V.cholerae, releasing 16:1 and 18:1 free fatty acids. Upon expression in E.coli with cognate DncV, the cell inner membrane shrinks and separates from the cell wall. Its function is as follows. Protects E.coli against phage infection. When the CBASS operon (capV-dncV-cap2-cap3) is introduced in E.coli MG1655 there is about 100-fold protection against phages P1 and T2. When the operon is introduced in E.coli MG1655 there is a more than 10(3) decrease in the efficiency of T2 plaque formation. Protects 100-fold against phage T5, offers no protection against T7. When the operon is introduced in E.coli MG1655 it protects against phages T2, T4, T5 and T6. Another paper shows the operon confers protection against phages P1, T2, T5 and T6 but not T4 or lambda. This is cGAMP-activated phospholipase from Vibrio cholerae serotype O1 (strain ATCC 39315 / El Tor Inaba N16961).